The primary structure comprises 248 residues: Indole-3-glycerol phosphate synthase (248 aa).

It belongs to the TrpC family.

The catalysed reaction is 1-(2-carboxyphenylamino)-1-deoxy-D-ribulose 5-phosphate + H(+) = (1S,2R)-1-C-(indol-3-yl)glycerol 3-phosphate + CO2 + H2O. It participates in amino-acid biosynthesis; L-tryptophan biosynthesis; L-tryptophan from chorismate: step 4/5. This Sulfolobus acidocaldarius (strain ATCC 33909 / DSM 639 / JCM 8929 / NBRC 15157 / NCIMB 11770) protein is Indole-3-glycerol phosphate synthase.